Here is a 471-residue protein sequence, read N- to C-terminus: MKMPKTIGLVHFIGIGGIGMSGIAEVLHNLGHRVQGSDQADSANVQRLREKGISISIGHKAENLGDAEVVVVSTAIKKDNPELIAAREKFLPVVRRAEMLAELMRFRNAIAIGGTHGKTTTTSMVAALLDAGGLDPTVINGGIINAYGTNARMGAGEWMVVEADESDGTFLKLPADIAVVTNIDPEHLDHYGSFDAVRAAFRQFVENVPFYGFGVLCLDHPEVQSMVGKIEDRKVVTYGENPQADVRFHNIRMDGATSIFDIEIRRRRTGQVIEIKDLRLPMPGRHNVSNATAAVAVAQRLGIKPEDIARGLATFGGVKRRFTLTGEWNGARIFDDYGHHPVEIRAVLRAAREACQGRIVAVHQPHRYSRLSSLFEDFTSCFNDADTILLAPVYAAGEEAIEGVSSEALVDRIKAAGHRDARHVPGQEALAPVIAKIAQPGDFVVLLGAGSITYWAAALPKQLAEISGNRA.

114 to 120 (GTHGKTT) contributes to the ATP binding site.

Belongs to the MurCDEF family.

The protein localises to the cytoplasm. It carries out the reaction UDP-N-acetyl-alpha-D-muramate + L-alanine + ATP = UDP-N-acetyl-alpha-D-muramoyl-L-alanine + ADP + phosphate + H(+). Its pathway is cell wall biogenesis; peptidoglycan biosynthesis. Its function is as follows. Cell wall formation. The sequence is that of UDP-N-acetylmuramate--L-alanine ligase from Rhizobium meliloti (strain 1021) (Ensifer meliloti).